A 229-amino-acid chain; its full sequence is MDIGKLVTRRSSEHPAGAFLFEPSVLIPFERAWRDQQLWQQRLFEEPSSPEAVWILQHPACYTLGRGASAQHLHFDPNEPPAPLHRIDRGGEVTHHLPGQLVAYPVLDLQRHTPDLHLYLRQLELVVIDVLRDLGLQGECLPGLTGVWVGRCKVAAIGVGCRRWITQHGLALNVDCELQGFAEITPCGLVGHQVGRLCDWMPGLRVSDVQPLLRQSLAARFHLAWIPQA.

A BPL/LPL catalytic domain is found at 47–225 (PSSPEAVWIL…SLAARFHLAW (179 aa)). Residues 89 to 96 (RGGEVTHH), 156 to 158 (AIG), and 169 to 171 (GLA) each bind substrate. The active-site Acyl-thioester intermediate is C187.

The protein belongs to the LipB family.

The protein resides in the cytoplasm. It catalyses the reaction octanoyl-[ACP] + L-lysyl-[protein] = N(6)-octanoyl-L-lysyl-[protein] + holo-[ACP] + H(+). Its pathway is protein modification; protein lipoylation via endogenous pathway; protein N(6)-(lipoyl)lysine from octanoyl-[acyl-carrier-protein]: step 1/2. Functionally, catalyzes the transfer of endogenously produced octanoic acid from octanoyl-acyl-carrier-protein onto the lipoyl domains of lipoate-dependent enzymes. Lipoyl-ACP can also act as a substrate although octanoyl-ACP is likely to be the physiological substrate. This chain is Octanoyltransferase, found in Synechococcus sp. (strain CC9902).